The chain runs to 518 residues: Type II methyltransferase M.HindII (518 aa).

This sequence belongs to the N(4)/N(6)-methyltransferase family.

It carries out the reaction a 2'-deoxyadenosine in DNA + S-adenosyl-L-methionine = an N(6)-methyl-2'-deoxyadenosine in DNA + S-adenosyl-L-homocysteine + H(+). Its function is as follows. A gamma subtype methylase, recognizes the double-stranded sequence 5'-GTYRAC-3', methylates A-5 on both strands, and protects the DNA from cleavage by the HindII endonuclease. This chain is Type II methyltransferase M.HindII (hindIIM), found in Haemophilus influenzae (strain ATCC 51907 / DSM 11121 / KW20 / Rd).